The sequence spans 96 residues: Protein RnfH (96 aa).

Belongs to the UPF0125 (RnfH) family.

This Escherichia fergusonii (strain ATCC 35469 / DSM 13698 / CCUG 18766 / IAM 14443 / JCM 21226 / LMG 7866 / NBRC 102419 / NCTC 12128 / CDC 0568-73) protein is Protein RnfH.